Here is a 94-residue protein sequence, read N- to C-terminus: Co-chaperonin GroES (94 aa).

Belongs to the GroES chaperonin family. As to quaternary structure, heptamer of 7 subunits arranged in a ring. Interacts with the chaperonin GroEL.

It is found in the cytoplasm. Its function is as follows. Together with the chaperonin GroEL, plays an essential role in assisting protein folding. The GroEL-GroES system forms a nano-cage that allows encapsulation of the non-native substrate proteins and provides a physical environment optimized to promote and accelerate protein folding. GroES binds to the apical surface of the GroEL ring, thereby capping the opening of the GroEL channel. This chain is Co-chaperonin GroES, found in Clostridium botulinum (strain Alaska E43 / Type E3).